We begin with the raw amino-acid sequence, 385 residues long: 1-deoxy-D-xylulose 5-phosphate reductoisomerase (385 aa).

T10, G11, S12, I13, K37, and N124 together coordinate NADPH. Position 125 (K125) interacts with 1-deoxy-D-xylulose 5-phosphate. NADPH is bound at residue E126. D150 provides a ligand contact to Mn(2+). 4 residues coordinate 1-deoxy-D-xylulose 5-phosphate: S151, E152, S176, and H199. Residue E152 participates in Mn(2+) binding. G205 lines the NADPH pocket. Residues S212, N217, K218, and E221 each coordinate 1-deoxy-D-xylulose 5-phosphate. E221 lines the Mn(2+) pocket.

It belongs to the DXR family. The cofactor is Mg(2+). Requires Mn(2+) as cofactor.

The enzyme catalyses 2-C-methyl-D-erythritol 4-phosphate + NADP(+) = 1-deoxy-D-xylulose 5-phosphate + NADPH + H(+). The protein operates within isoprenoid biosynthesis; isopentenyl diphosphate biosynthesis via DXP pathway; isopentenyl diphosphate from 1-deoxy-D-xylulose 5-phosphate: step 1/6. Its function is as follows. Catalyzes the NADPH-dependent rearrangement and reduction of 1-deoxy-D-xylulose-5-phosphate (DXP) to 2-C-methyl-D-erythritol 4-phosphate (MEP). This is 1-deoxy-D-xylulose 5-phosphate reductoisomerase from Clostridium botulinum (strain Okra / Type B1).